Here is a 275-residue protein sequence, read N- to C-terminus: 4-hydroxy-tetrahydrodipicolinate reductase (275 aa).

NAD(+)-binding positions include 13–18 (GAAGKM), 108–110 (GTT), and 134–137 (VPNF). His164 functions as the Proton donor/acceptor in the catalytic mechanism. His165 contributes to the (S)-2,3,4,5-tetrahydrodipicolinate binding site. Residue Lys168 is the Proton donor of the active site. Residue 174 to 175 (GT) coordinates (S)-2,3,4,5-tetrahydrodipicolinate.

Belongs to the DapB family.

The protein resides in the cytoplasm. The enzyme catalyses (S)-2,3,4,5-tetrahydrodipicolinate + NAD(+) + H2O = (2S,4S)-4-hydroxy-2,3,4,5-tetrahydrodipicolinate + NADH + H(+). It catalyses the reaction (S)-2,3,4,5-tetrahydrodipicolinate + NADP(+) + H2O = (2S,4S)-4-hydroxy-2,3,4,5-tetrahydrodipicolinate + NADPH + H(+). It functions in the pathway amino-acid biosynthesis; L-lysine biosynthesis via DAP pathway; (S)-tetrahydrodipicolinate from L-aspartate: step 4/4. Catalyzes the conversion of 4-hydroxy-tetrahydrodipicolinate (HTPA) to tetrahydrodipicolinate. This Gloeothece citriformis (strain PCC 7424) (Cyanothece sp. (strain PCC 7424)) protein is 4-hydroxy-tetrahydrodipicolinate reductase.